A 1110-amino-acid polypeptide reads, in one-letter code: Serine/threonine-protein kinase PknK (1110 aa).

Positions 26 to 283 constitute a Protein kinase domain; sequence FDNVEEIGRG…TAADVGEELR (258 aa). ATP-binding positions include 32–40 and lysine 55; that span reads IGRGGFGVV. Aspartate 149 acts as the Proton acceptor in catalysis. Residues asparagine 154 and aspartate 167 each contribute to the Mg(2+) site. Residues threonine 179 and threonine 181 each carry the phosphothreonine; by autocatalysis modification. Residues 308-343 are disordered; sequence RSPEAHAAHRHTGGGTPTVPTPPTPATKYRPSVPTG.

It belongs to the protein kinase superfamily. Ser/Thr protein kinase family. In terms of assembly, forms oligomeric complexes in solution. In terms of processing, can autophosphorylate the carboxyl terminal region in addition to Thr-179 and Thr-181.

Its subcellular location is the cytoplasm. The protein resides in the cell membrane. It is found in the secreted. The protein localises to the cell wall. It carries out the reaction L-seryl-[protein] + ATP = O-phospho-L-seryl-[protein] + ADP + H(+). The catalysed reaction is L-threonyl-[protein] + ATP = O-phospho-L-threonyl-[protein] + ADP + H(+). In terms of biological role, key microbial factor involved in regulation of early and late events in tuberculosis infection, and in host-pathogen interactions. The sequence is that of Serine/threonine-protein kinase PknK (pknK) from Mycobacterium tuberculosis (strain CDC 1551 / Oshkosh).